Reading from the N-terminus, the 137-residue chain is Ribosomal RNA small subunit methyltransferase G (137 aa).

Residues Gly75, Phe80, and Ala126–Glu127 each bind S-adenosyl-L-methionine.

Belongs to the methyltransferase superfamily. RNA methyltransferase RsmG family.

The protein resides in the cytoplasm. In terms of biological role, specifically methylates the N7 position of a guanine in 16S rRNA. This is Ribosomal RNA small subunit methyltransferase G from Mycoplasma mycoides subsp. mycoides SC (strain CCUG 32753 / NCTC 10114 / PG1).